The sequence spans 1412 residues: Protein MODIFIER OF SNC1 1 (1412 aa).

6 disordered regions span residues 1 to 276 (MTSS…QSYP), 384 to 437 (GYGS…TQRP), 472 to 798 (QQMQ…KQKQ), 827 to 888 (NEGV…DESI), 909 to 1144 (DIKV…WNDG), and 1156 to 1412 (AEEM…GDRN). Residues 56–103 (SWGSKSSLNAWGTSSLSPRTESGPGSPSHLSNRPSSGGSVTRPSTADS) show a composition bias toward polar residues. Ser-72 carries the phosphoserine modification. Residues 109 to 119 (SSSSVAWDSNS) show a composition bias toward low complexity. Residues 120-135 (RPSSASGVFPSNQPSV) are compositionally biased toward polar residues. Basic and acidic residues-rich tracts occupy residues 197-207 (AEKDTSEKSTR) and 236-267 (ANDRIGDANSWRRENQPYSEDAPRHCREEGQL). Over residues 478 to 488 (RNERREIRNDA) the composition is skewed to basic and acidic residues. Polar residues-rich tracts occupy residues 517–531 (KTRTNDGWQNSSSVV), 539–553 (QPRTLNSGNSANKVS), 565–581 (SKNSSHYNQGDSATNKN), and 610–639 (RIVNSEGNDAWQKTTVMSGSSHTTLATNTE). Positions 665-713 (DPKDNQRSTMRELARQRAQQRQKEEEERARDQRAKALAKLEELNRRSQI) are enriched in basic and acidic residues. Residues 667–717 (KDNQRSTMRELARQRAQQRQKEEEERARDQRAKALAKLEELNRRSQIYEEG) are a coiled coil. Composition is skewed to polar residues over residues 738–749 (GSHSSNATNSVE), 756–779 (KNTTQNTRTSTEYANNVGPSQQDN), and 829–847 (GVSSNNSDMPATSTVSAES). A compositionally biased stretch (basic residues) spans 850–862 (PKRKNNRNGKKKH). Basic and acidic residues predominate over residues 877 to 888 (VGKETKSGDESI). Phosphoserine is present on Ser-883. Polar residues-rich tracts occupy residues 914–938 (GDSSEQISSFTNEESQNRAKNNWKS) and 983–1003 (QTTVPEFGTSSKSQHQGQTSS). Basic and acidic residues predominate over residues 1006–1023 (KRVEIERYVPKPIVKEMA). Positions 1056–1070 (LQPSGSTAGKSGSPS) are enriched in polar residues. Basic residues predominate over residues 1071-1084 (KSRHGNGRQGKHGR). Residues 1106–1137 (FVTSNQPIRGTVNYHSSKQTEQIAAKDQTTCN) show a composition bias toward polar residues. Composition is skewed to basic and acidic residues over residues 1191-1202 (DPKKGNKRDFNK), 1222-1232 (KEGRVPGDHVW), and 1242-1251 (GGRESTRDKP). Composition is skewed to polar residues over residues 1266 to 1286 (GFTTEQKTTSADTQAQLQNRS) and 1293 to 1307 (VEQNPNSMFQKNTGQ). Basic and acidic residues-rich tracts occupy residues 1338–1351 (SNRDRQKQNLHYEY) and 1359–1369 (YDGERSREQSK). The span at 1384-1397 (QGQQRQGGYQQQRG) shows a compositional bias: low complexity. The span at 1400–1412 (GRNGGHGFTGDRN) shows a compositional bias: gly residues.

Interacts with TCP14 and TCP15.

In terms of biological role, involved in the regulation of the chromatin structure and DNA methylation at the SNC1 locus. Regulates the expression of SNC1 at chromatin level. The chain is Protein MODIFIER OF SNC1 1 (MOS1) from Arabidopsis thaliana (Mouse-ear cress).